The chain runs to 206 residues: Venom allergen 5 2 (206 aa).

4 disulfide bridges follow: Cys-4/Cys-16, Cys-8/Cys-104, Cys-28/Cys-96, and Cys-172/Cys-189. Positions Asp-48–Tyr-191 constitute an SCP domain.

Belongs to the CRISP family. Venom allergen 5-like subfamily. Expressed by the venom gland.

Its subcellular location is the secreted. This Polybia paulista (Neotropical social wasp) protein is Venom allergen 5 2.